The primary structure comprises 177 residues: F(420)H(2) dehydrogenase subunit I (177 aa).

The disordered stretch occupies residues 1 to 21 (MGCPEVQDRPGSGYELEETPA). 4Fe-4S ferredoxin-type domains lie at 76–105 (GLQTLDKSKCIGCGICANTCPNSAIKIVKA) and 116–145 (WFPQIDIGHCLFCGLCIDQCPKGALSSGKE). Residues Cys-85, Cys-88, Cys-91, Cys-95, Cys-125, Cys-128, Cys-131, and Cys-135 each coordinate [4Fe-4S] cluster.

The protein belongs to the complex I 23 kDa subunit family. The FPO complex is composed of at least 13 different subunits. The cofactor is [4Fe-4S] cluster.

It carries out the reaction methanophenazine + reduced coenzyme F420-(gamma-L-Glu)(n) = dihydromethanophenazine + oxidized coenzyme F420-(gamma-L-Glu)(n) + H(+). In terms of biological role, component of the F(420)H(2) dehydrogenase (FPO complex) which is part of the energy-conserving F(420)H(2):heterodisulfide oxidoreductase system. The membrane-bound electron transfer system of the complex plays an important role in the metabolism of methylotrophic methanogens when the organisms grow on methanol or methylamines. Catalyzes the oxidation of methanophenazine to dihydromethanophenazine. It shuttles electrons from F(420)H(2), via FAD and iron-sulfur (Fe-S) centers, to methanophenazine (an electron carrier in the membrane). It couples the redox reaction to proton translocation (for every two electrons transferred, two hydrogen ions are translocated across the cytoplasmic membrane), and thus conserves the redox energy in a proton gradient. It also catalyzes the oxidation of F(420)H(2) with quinones such as 2,3-dimethyl-1,4-naphthoquinone, 2-methyl-1,4-naphthoquinone and tetramethyl-p-benzoquinone. This is F(420)H(2) dehydrogenase subunit I (fpoI) from Methanosarcina mazei (strain ATCC BAA-159 / DSM 3647 / Goe1 / Go1 / JCM 11833 / OCM 88) (Methanosarcina frisia).